A 155-amino-acid polypeptide reads, in one-letter code: Deoxyuridine 5'-triphosphate nucleotidohydrolase (155 aa).

Substrate is bound by residues 75 to 77 (RSG), asparagine 88, and 92 to 94 (TVD).

It belongs to the dUTPase family. The cofactor is Mg(2+).

The catalysed reaction is dUTP + H2O = dUMP + diphosphate + H(+). The protein operates within pyrimidine metabolism; dUMP biosynthesis; dUMP from dCTP (dUTP route): step 2/2. Functionally, this enzyme is involved in nucleotide metabolism: it produces dUMP, the immediate precursor of thymidine nucleotides and it decreases the intracellular concentration of dUTP so that uracil cannot be incorporated into DNA. The protein is Deoxyuridine 5'-triphosphate nucleotidohydrolase of Caulobacter vibrioides (strain ATCC 19089 / CIP 103742 / CB 15) (Caulobacter crescentus).